The following is a 202-amino-acid chain: Small ribosomal subunit protein uS4 (202 aa).

The disordered stretch occupies residues 16 to 42 (GELPGLSRKNPRRAYPPGQHGQARKKR). One can recognise an S4 RNA-binding domain in the interval 90–151 (MRLDNTVFRL…QERSRRLVEA (62 aa)).

Belongs to the universal ribosomal protein uS4 family. Part of the 30S ribosomal subunit. Contacts protein S5. The interaction surface between S4 and S5 is involved in control of translational fidelity.

Its function is as follows. One of the primary rRNA binding proteins, it binds directly to 16S rRNA where it nucleates assembly of the body of the 30S subunit. In terms of biological role, with S5 and S12 plays an important role in translational accuracy. The chain is Small ribosomal subunit protein uS4 from Rippkaea orientalis (strain PCC 8801 / RF-1) (Cyanothece sp. (strain PCC 8801)).